The following is a 209-amino-acid chain: Uracil phosphoribosyltransferase (209 aa).

5-phospho-alpha-D-ribose 1-diphosphate is bound by residues Arg-79, Arg-104, and 131–139 (DPMLATGGS). Uracil contacts are provided by residues Val-194 and 199 to 201 (GDA). Asp-200 serves as a coordination point for 5-phospho-alpha-D-ribose 1-diphosphate.

This sequence belongs to the UPRTase family. Mg(2+) serves as cofactor.

It catalyses the reaction UMP + diphosphate = 5-phospho-alpha-D-ribose 1-diphosphate + uracil. Its pathway is pyrimidine metabolism; UMP biosynthesis via salvage pathway; UMP from uracil: step 1/1. Its activity is regulated as follows. Allosterically activated by GTP. Catalyzes the conversion of uracil and 5-phospho-alpha-D-ribose 1-diphosphate (PRPP) to UMP and diphosphate. In Bacillus cytotoxicus (strain DSM 22905 / CIP 110041 / 391-98 / NVH 391-98), this protein is Uracil phosphoribosyltransferase.